Reading from the N-terminus, the 173-residue chain is Co-chaperone protein HscB homolog (173 aa).

Residues C5–I77 form the J domain.

The protein belongs to the HscB family. Interacts with HscA and stimulates its ATPase activity.

Functionally, co-chaperone involved in the maturation of iron-sulfur cluster-containing proteins. Seems to help targeting proteins to be folded toward HscA. This chain is Co-chaperone protein HscB homolog, found in Pseudomonas putida (strain GB-1).